The primary structure comprises 229 residues: Large ribosomal subunit protein uL1 (229 aa).

The protein belongs to the universal ribosomal protein uL1 family. As to quaternary structure, part of the 50S ribosomal subunit.

In terms of biological role, binds directly to 23S rRNA. The L1 stalk is quite mobile in the ribosome, and is involved in E site tRNA release. Its function is as follows. Protein L1 is also a translational repressor protein, it controls the translation of the L11 operon by binding to its mRNA. The protein is Large ribosomal subunit protein uL1 of Lactococcus lactis subsp. cremoris (strain MG1363).